Here is a 144-residue protein sequence, read N- to C-terminus: Universal stress protein A (144 aa).

The protein belongs to the universal stress protein A family. As to quaternary structure, homodimer.

The protein localises to the cytoplasm. In terms of biological role, required for resistance to DNA-damaging agents. The chain is Universal stress protein A (uspA) from Escherichia coli O6:H1 (strain CFT073 / ATCC 700928 / UPEC).